Reading from the N-terminus, the 444-residue chain is ATP-dependent protease ATPase subunit HslU (444 aa).

ATP contacts are provided by residues Ile-18, 60–65 (GVGKTE), Asp-257, Glu-322, and Arg-394.

The protein belongs to the ClpX chaperone family. HslU subfamily. As to quaternary structure, a double ring-shaped homohexamer of HslV is capped on each side by a ring-shaped HslU homohexamer. The assembly of the HslU/HslV complex is dependent on binding of ATP.

It localises to the cytoplasm. Its function is as follows. ATPase subunit of a proteasome-like degradation complex; this subunit has chaperone activity. The binding of ATP and its subsequent hydrolysis by HslU are essential for unfolding of protein substrates subsequently hydrolyzed by HslV. HslU recognizes the N-terminal part of its protein substrates and unfolds these before they are guided to HslV for hydrolysis. The chain is ATP-dependent protease ATPase subunit HslU from Psychromonas ingrahamii (strain DSM 17664 / CCUG 51855 / 37).